The following is a 364-amino-acid chain: Protein L-Myc (364 aa).

3 disordered regions span residues 41–81 (TSPP…HSKG), 111–172 (DRLA…EIDV), and 219–285 (PPES…KRKN). Over residues 228-245 (ASERGPQEEVLERDAAGE) the composition is skewed to basic and acidic residues. The bHLH domain maps to 281-333 (TKRKNHNFLERKRRNDLRSRFLALRDQVPTLASCSKAPKVVILSKALEYLQAL). Residues 333-361 (LVGAEKRMATEKRQLRCRQQQLQKRIAYL) are leucine-zipper.

In terms of assembly, efficient DNA binding requires dimerization with another bHLH protein. Binds DNA as a heterodimer with MAX.

The protein resides in the nucleus. The protein is Protein L-Myc (MYCL) of Homo sapiens (Human).